The chain runs to 437 residues: Chromosomal replication initiator protein DnaA (437 aa).

The tract at residues 1–69 is domain I, interacts with DnaA modulators; the sequence is MLGDTTLKQL…AHLFELSTGI (69 aa). Positions 69–100 are domain II; the sequence is IRPKIEIRLGSLKKDVKSSSPKAGVSKGQKST. The tract at residues 101–315 is domain III, AAA+ region; sequence ILNPSFTFDS…GIIIKLNAYA (215 aa). The ATP site is built by glycine 145, glycine 147, lysine 148, and threonine 149. Residues 316–437 are domain IV, binds dsDNA; it reads NLMNQEITLQ…ELKNKIKSRN (122 aa).

The protein belongs to the DnaA family. Oligomerizes as a right-handed, spiral filament on DNA at oriC.

The protein resides in the cytoplasm. Plays an essential role in the initiation and regulation of chromosomal replication. ATP-DnaA binds to the origin of replication (oriC) to initiate formation of the DNA replication initiation complex once per cell cycle. Binds the DnaA box (a 9 base pair repeat at the origin) and separates the double-stranded (ds)DNA. Forms a right-handed helical filament on oriC DNA; dsDNA binds to the exterior of the filament while single-stranded (ss)DNA is stabiized in the filament's interior. The ATP-DnaA-oriC complex binds and stabilizes one strand of the AT-rich DNA unwinding element (DUE), permitting loading of DNA polymerase. After initiation quickly degrades to an ADP-DnaA complex that is not apt for DNA replication. Binds acidic phospholipids. This Wolinella succinogenes (strain ATCC 29543 / DSM 1740 / CCUG 13145 / JCM 31913 / LMG 7466 / NCTC 11488 / FDC 602W) (Vibrio succinogenes) protein is Chromosomal replication initiator protein DnaA.